The primary structure comprises 3094 residues: Replicase polyprotein 1ab (3094 aa).

Active-site for leader protease activity residues include Cys509 and His569. Residues Ala622–Thr647 are a coiled coil. The 188-residue stretch at Ser670–Met857 folds into the Alphavirus-like MT domain. The span at Asp1807–Val1816 shows a compositional bias: low complexity. A disordered region spans residues Asp1807–Ser1828. Residues Thr2215–Gly2387 form the (+)RNA virus helicase ATP-binding domain. The 161-residue stretch at Glu2388–Gly2548 folds into the (+)RNA virus helicase C-terminal domain. Residues Tyr2817 to Ala2930 enclose the RdRp catalytic domain.

Post-translationally, the leader protease is released by autoproteolysis.

It is found in the host cytoplasmic vesicle membrane. The catalysed reaction is RNA(n) + a ribonucleoside 5'-triphosphate = RNA(n+1) + diphosphate. It carries out the reaction ATP + H2O = ADP + phosphate + H(+). In terms of biological role, L-pro is involved in systemic transport and in RNA amplification. Functionally, RNA-dependent RNA polymerase replicates the viral genome. This chain is Replicase polyprotein 1ab, found in Beet yellows virus (isolate Ukraine) (BYV).